Here is a 478-residue protein sequence, read N- to C-terminus: Proline--tRNA ligase (478 aa).

This sequence belongs to the class-II aminoacyl-tRNA synthetase family. ProS type 3 subfamily. In terms of assembly, homodimer.

It is found in the cytoplasm. It catalyses the reaction tRNA(Pro) + L-proline + ATP = L-prolyl-tRNA(Pro) + AMP + diphosphate. Functionally, catalyzes the attachment of proline to tRNA(Pro) in a two-step reaction: proline is first activated by ATP to form Pro-AMP and then transferred to the acceptor end of tRNA(Pro). The protein is Proline--tRNA ligase of Clostridium botulinum (strain Okra / Type B1).